The primary structure comprises 305 residues: Acetyl-coenzyme A carboxylase carboxyl transferase subunit alpha (305 aa).

The CoA carboxyltransferase C-terminal domain occupies alanine 33–aspartate 280.

It belongs to the AccA family. Acetyl-CoA carboxylase is a heterohexamer composed of biotin carboxyl carrier protein (AccB), biotin carboxylase (AccC) and two subunits each of ACCase subunit alpha (AccA) and ACCase subunit beta (AccD).

The protein resides in the cytoplasm. It carries out the reaction N(6)-carboxybiotinyl-L-lysyl-[protein] + acetyl-CoA = N(6)-biotinyl-L-lysyl-[protein] + malonyl-CoA. Its pathway is lipid metabolism; malonyl-CoA biosynthesis; malonyl-CoA from acetyl-CoA: step 1/1. In terms of biological role, component of the acetyl coenzyme A carboxylase (ACC) complex. First, biotin carboxylase catalyzes the carboxylation of biotin on its carrier protein (BCCP) and then the CO(2) group is transferred by the carboxyltransferase to acetyl-CoA to form malonyl-CoA. The sequence is that of Acetyl-coenzyme A carboxylase carboxyl transferase subunit alpha from Treponema denticola (strain ATCC 35405 / DSM 14222 / CIP 103919 / JCM 8153 / KCTC 15104).